The following is a 1108-amino-acid chain: Eukaryotic translation initiation factor 2-alpha kinase 3 (1108 aa).

Residues 1 to 27 (MERATQPRPRALLLLFLLLGCAAGISA) form the signal peptide. The Lumenal portion of the chain corresponds to 28–506 (VARARSLLAP…HYSKNIRKKD (479 aa)). The interval 71 to 92 (EALPAASGEQESRATESDDDVE) is disordered. An N-linked (GlcNAc...) asparagine glycan is attached at asparagine 253. The chain crosses the membrane as a helical span at residues 507–527 (PILLLHWWKEIFGTILLCIVA). Residues 528–1108 (TTFIVRRLFH…SSTFSPLPGN (581 aa)) lie on the Cytoplasmic side of the membrane. Residues 542 to 563 (RQRKESETQCQTESKYDSVSAD) are disordered. One can recognise a Protein kinase domain in the interval 585-1069 (FEPIQCMGRG…ATDIIENAVF (485 aa)). ATP is bound at residue 591-599 (MGRGGFGVV). Residue tyrosine 611 is modified to Phosphotyrosine; by autocatalysis. Lysine 614 serves as a coordination point for ATP. The segment at 639 to 880 (EHPGIVRYFN…SPKVYLYIQM (242 aa)) is insert loop. Serine 707 is subject to Phosphoserine. Disordered stretches follow at residues 772–818 (DEGH…RMNR) and 832–856 (FKHS…TTLS). Residues 785-798 (SPYTRSREGTSSSI) show a composition bias toward polar residues. At threonine 794 the chain carries Phosphothreonine. Low complexity predominate over residues 837 to 856 (SRSSSEATLSTSPTRPTTLS). Residue aspartate 929 is the Proton acceptor of the active site. Position 974 is a phosphothreonine (threonine 974). Positions 1080–1108 (LRQRSRSLSSSGTKHSRQPSSTFSPLPGN) are disordered. A Phosphoserine modification is found at serine 1086. Polar residues predominate over residues 1097-1108 (QPSSTFSPLPGN).

It belongs to the protein kinase superfamily. Ser/Thr protein kinase family. GCN2 subfamily. Forms dimers with HSPA5/BIP in resting cells. Homotetramerizes in response to endoplasmic reticulum (ER) stress, leading to its activation. Interacts with HSP90B1/GRP94. Interacts with DNAJC3; inhibiting EIF2AK3/PERK activity. Interacts with ATAD3A; ATAD3A and EIF2S1/eIF-2-alpha occupy a common binding site within the cytoplasmic loop of EIF2AK3/PERK, leading to prevent EIF2AK3/PERK association with its substrate EIF2S1/eIF-2-alpha. Interacts with MFN2. Interacts with TMEM33. Interacts with PDIA6. Interacts with LACC1. Oligomerization of the N-terminal ER luminal domain by ER stress promotes EIF2AK3/PERK trans-autophosphorylation of the C-terminal cytoplasmic kinase domain at multiple residues including Thr-974 on the kinase activation loop. Autophosphorylated at Tyr-611 following endoplasmic reticulum stress, leading to activate its activity. Dephosphorylated at Tyr-611 by PTPN1/PTP1B, leading to inactivate its enzyme activity. Phosphorylation at Thr-794 by AKT (AKT1, AKT2 and/or AKT3) inactivates EIF2AK3/PERK. In terms of processing, ADP-ribosylated by PARP16 upon ER stress, which increases kinase activity. Ubiquitous.

The protein localises to the endoplasmic reticulum membrane. The catalysed reaction is L-seryl-[protein] + ATP = O-phospho-L-seryl-[protein] + ADP + H(+). It catalyses the reaction L-threonyl-[protein] + ATP = O-phospho-L-threonyl-[protein] + ADP + H(+). The enzyme catalyses L-tyrosyl-[protein] + ATP = O-phospho-L-tyrosyl-[protein] + ADP + H(+). Its activity is regulated as follows. Inhibited by HSPA5/BIP in absence of stress. Perturbation in protein folding in the endoplasmic reticulum (ER) promotes reversible dissociation from HSPA5/BIP and oligomerization, resulting in trans-autophosphorylation and kinase activity induction. Inactivated following phosphorylation at Thr-794 by AKT (AKT1, AKT2 and/or AKT3). Inhibited by ATAD3A at mitochondria-endoplasmic reticulum contact sites, providing a safe haven for mitochondrial protein translation during ER stress. In terms of biological role, metabolic-stress sensing protein kinase that phosphorylates the alpha subunit of eukaryotic translation initiation factor 2 (EIF2S1/eIF-2-alpha) in response to various stress, such as unfolded protein response (UPR). Key effector of the integrated stress response (ISR) to unfolded proteins: EIF2AK3/PERK specifically recognizes and binds misfolded proteins, leading to its activation and EIF2S1/eIF-2-alpha phosphorylation. EIF2S1/eIF-2-alpha phosphorylation in response to stress converts EIF2S1/eIF-2-alpha in a global protein synthesis inhibitor, leading to a global attenuation of cap-dependent translation, while concomitantly initiating the preferential translation of ISR-specific mRNAs, such as the transcriptional activators ATF4 and QRICH1, and hence allowing ATF4- and QRICH1-mediated reprogramming. The EIF2AK3/PERK-mediated unfolded protein response increases mitochondrial oxidative phosphorylation by promoting ATF4-mediated expression of COX7A2L/SCAF1, thereby increasing formation of respiratory chain supercomplexes. In contrast to most subcellular compartments, mitochondria are protected from the EIF2AK3/PERK-mediated unfolded protein response due to EIF2AK3/PERK inhibition by ATAD3A at mitochondria-endoplasmic reticulum contact sites. In addition to EIF2S1/eIF-2-alpha, also phosphorylates NFE2L2/NRF2 in response to stress, promoting release of NFE2L2/NRF2 from the BCR(KEAP1) complex, leading to nuclear accumulation and activation of NFE2L2/NRF2. Serves as a critical effector of unfolded protein response (UPR)-induced G1 growth arrest due to the loss of cyclin-D1 (CCND1). Involved in control of mitochondrial morphology and function. The chain is Eukaryotic translation initiation factor 2-alpha kinase 3 (Eif2ak3) from Rattus norvegicus (Rat).